Consider the following 491-residue polypeptide: tRNA-2-methylthio-N(6)-dimethylallyladenosine synthase (491 aa).

The MTTase N-terminal domain occupies 3–119 (RSYQIRTYGC…LPTLLERARH (117 aa)). [4Fe-4S] cluster-binding residues include C12, C48, C82, C156, C160, and C163. One can recognise a Radical SAM core domain in the interval 142-372 (RESAYSGWVS…IELQNQISWD (231 aa)). The region spanning 375–446 (KELVGRSVEL…PHHLVADSEI (72 aa)) is the TRAM domain.

It belongs to the methylthiotransferase family. MiaB subfamily. Monomer. The cofactor is [4Fe-4S] cluster.

Its subcellular location is the cytoplasm. The enzyme catalyses N(6)-dimethylallyladenosine(37) in tRNA + (sulfur carrier)-SH + AH2 + 2 S-adenosyl-L-methionine = 2-methylsulfanyl-N(6)-dimethylallyladenosine(37) in tRNA + (sulfur carrier)-H + 5'-deoxyadenosine + L-methionine + A + S-adenosyl-L-homocysteine + 2 H(+). Functionally, catalyzes the methylthiolation of N6-(dimethylallyl)adenosine (i(6)A), leading to the formation of 2-methylthio-N6-(dimethylallyl)adenosine (ms(2)i(6)A) at position 37 in tRNAs that read codons beginning with uridine. This Saccharopolyspora erythraea (strain ATCC 11635 / DSM 40517 / JCM 4748 / NBRC 13426 / NCIMB 8594 / NRRL 2338) protein is tRNA-2-methylthio-N(6)-dimethylallyladenosine synthase.